The chain runs to 111 residues: Class I hydrophobin 2 (111 aa).

The N-terminal stretch at 1–21 (MFSRVMFCTFLILPLLAAATA) is a signal peptide. 4 disulfide bridges follow: C30-C90, C37-C84, C38-C71, and C91-C104.

The protein belongs to the fungal hydrophobin family. Self-assembles to form functional amyloid fibrils called rodlets. Self-assembly into fibrillar rodlets occurs spontaneously at hydrophobic:hydrophilic interfaces and the rodlets further associate laterally to form amphipathic monolayers. Behavior depends on environmental conditions: (1) when the pH increases or in the presence of Ca(2+) ions, an assembled state, beta-sheet rich, is formed; (2) when the solvent polarity increases, the vhm2 shows an increased tendency to reach hydrophobic/hydrophilic interfaces, with no detectable conformational change; and (3) at high temperature, a reversible conformational change and reversible aggregation occur. The physical and chemical properties, both in solution and as a biofilm, are affected by polysaccharides that act as hydrophilic stabilizer.

The protein resides in the secreted. The protein localises to the cell wall. Functionally, aerial growth, conidiation, and dispersal of filamentous fungi in the environment rely upon a capability of their secreting small amphipathic proteins called hydrophobins (HPBs) with low sequence identity. Class I can self-assemble into an outermost layer of rodlet bundles on aerial cell surfaces, conferring cellular hydrophobicity that supports fungal growth, development and dispersal; whereas Class II form highly ordered films at water-air interfaces through intermolecular interactions but contribute nothing to the rodlet structure. Vmh2 is a class I hydrophobin involved in biofilm formation and is essential for the maintenance of the surface hydrophobicity of the mycelium. Seems not to be involved in hyphal resistance against environmental stress. In Pleurotus ostreatus (strain PC15) (Oyster mushroom), this protein is Class I hydrophobin 2.